The sequence spans 636 residues: Threonine--tRNA ligase (636 aa).

In terms of domain architecture, TGS spans Met1–Lys60. A catalytic region spans residues Asp242–Pro533. Zn(2+)-binding residues include Cys333, His384, and His510.

This sequence belongs to the class-II aminoacyl-tRNA synthetase family. As to quaternary structure, homodimer. It depends on Zn(2+) as a cofactor.

The protein resides in the cytoplasm. The enzyme catalyses tRNA(Thr) + L-threonine + ATP = L-threonyl-tRNA(Thr) + AMP + diphosphate + H(+). Functionally, catalyzes the attachment of threonine to tRNA(Thr) in a two-step reaction: L-threonine is first activated by ATP to form Thr-AMP and then transferred to the acceptor end of tRNA(Thr). Also edits incorrectly charged L-seryl-tRNA(Thr). In Wigglesworthia glossinidia brevipalpis, this protein is Threonine--tRNA ligase.